A 129-amino-acid polypeptide reads, in one-letter code: Glycine cleavage system H protein (129 aa).

A Lipoyl-binding domain is found at Ile24–Arg106. Position 65 is an N6-lipoyllysine (Lys65).

The protein belongs to the GcvH family. As to quaternary structure, the glycine cleavage system is composed of four proteins: P, T, L and H. It depends on (R)-lipoate as a cofactor.

The glycine cleavage system catalyzes the degradation of glycine. The H protein shuttles the methylamine group of glycine from the P protein to the T protein. This Synechococcus sp. (strain JA-3-3Ab) (Cyanobacteria bacterium Yellowstone A-Prime) protein is Glycine cleavage system H protein.